The following is a 545-amino-acid chain: Glucose-6-phosphate isomerase (545 aa).

Glu351 serves as the catalytic Proton donor. Residues His382 and Lys510 contribute to the active site.

It belongs to the GPI family.

The protein localises to the cytoplasm. It catalyses the reaction alpha-D-glucose 6-phosphate = beta-D-fructose 6-phosphate. It participates in carbohydrate biosynthesis; gluconeogenesis. It functions in the pathway carbohydrate degradation; glycolysis; D-glyceraldehyde 3-phosphate and glycerone phosphate from D-glucose: step 2/4. In terms of biological role, catalyzes the reversible isomerization of glucose-6-phosphate to fructose-6-phosphate. The protein is Glucose-6-phosphate isomerase of Shewanella sp. (strain ANA-3).